The primary structure comprises 314 residues: MTQVLPSGLVASAVVAASSANLGPGFDSLGLALSLYDEIVLETTDSGLEVVVEGEGAGQVPLNSEHLVVRAIQHGLRAVGVPATGLIVRCRNDIPHSRGLGSSASAVVGGLAAVNGLVSQAGWVPLSDQQLIQLSSEFEGHPDNAAAAVLGGAVVSWIERCGDRADYSAVQLDLHPDIHLFSAIPEVRSSTAETRVLLPDLVSHDDARFNISRAALLVVALTQRPDLLMAATEDVLHQPQRASAMPASAEYLQLLRRHKVAATLSGAGPALIALTTNPDLPPEAVEYGAANGFTITAMTAGDRVRWKPGVAFSD.

95 to 105 provides a ligand contact to ATP; sequence PHSRGLGSSAS.

Belongs to the GHMP kinase family. Homoserine kinase subfamily.

It localises to the cytoplasm. It carries out the reaction L-homoserine + ATP = O-phospho-L-homoserine + ADP + H(+). It participates in amino-acid biosynthesis; L-threonine biosynthesis; L-threonine from L-aspartate: step 4/5. Catalyzes the ATP-dependent phosphorylation of L-homoserine to L-homoserine phosphate. The sequence is that of Homoserine kinase from Mycobacterium ulcerans (strain Agy99).